The sequence spans 315 residues: Transcription repressor OFP7 (315 aa).

Positions 113–183 (YETPRRKIYN…ELPRVTRRPR (71 aa)) are disordered. Residues 130 to 145 (RRRLKKKEKSNSRRRG) are compositionally biased toward basic residues. Residues 160 to 174 (LPSSTNLSPEYSSSE) are compositionally biased toward polar residues. The OVATE domain maps to 230–289 (VVKKSEDPYEDFKGSMMEMIVEKKMFEVAELEQLLSCFLSLNAKRHHRAIVRAFSEIWVA).

Expressed in roots, shoots, stems, flower buds and siliques.

The protein localises to the nucleus. Functionally, transcriptional repressor that regulates multiple aspects of plant growth and development through the regulation of BEL1-LIKE (BLH) and KNOX TALE (KNAT) homeodomain transcription factors. The chain is Transcription repressor OFP7 (OFP7) from Arabidopsis thaliana (Mouse-ear cress).